The primary structure comprises 236 residues: MADDWESAADSDVVIRPTAAASVNKWEGEDEDEDIKDSWEDEEEKKDEEKPTKTEAPAKPKPNKALKAKLEQQALREEEAEAERLANLSPAEKLAEKLRLQKIQEASDLKHAQEAFGVTSTCGGLDAFNPETKEEFKEFGATLSWKVAQFRESEHFPQFVEDLVRSLCVNLSAADIKKVKMNVEVLHSEKLKLEKANAKKPAGKGKGKVTLRTENDDIDGYQKYGNDFTEDYDDFM.

The tract at residues 1–84 (MADDWESAAD…LREEEAEAER (84 aa)) is disordered. The span at 28-46 (GEDEDEDIKDSWEDEEEKK) shows a compositional bias: acidic residues. 2 stretches are compositionally biased toward basic and acidic residues: residues 47 to 58 (DEEKPTKTEAPA) and 68 to 77 (AKLEQQALRE).

This sequence belongs to the eIF-3 subunit J family. Component of the eukaryotic translation initiation factor 3 (eIF-3) complex. The eIF-3 complex interacts with pix.

The protein resides in the cytoplasm. Functionally, component of the eukaryotic translation initiation factor 3 (eIF-3) complex, which is involved in protein synthesis of a specialized repertoire of mRNAs and, together with other initiation factors, stimulates binding of mRNA and methionyl-tRNAi to the 40S ribosome. The eIF-3 complex specifically targets and initiates translation of a subset of mRNAs involved in cell proliferation. The chain is Eukaryotic translation initiation factor 3 subunit J from Drosophila sechellia (Fruit fly).